A 209-amino-acid polypeptide reads, in one-letter code: Ribosomal RNA large subunit methyltransferase E (209 aa).

Glycine 63, tryptophan 65, aspartate 83, aspartate 99, and aspartate 124 together coordinate S-adenosyl-L-methionine. Residue lysine 164 is the Proton acceptor of the active site.

It belongs to the class I-like SAM-binding methyltransferase superfamily. RNA methyltransferase RlmE family.

The protein localises to the cytoplasm. The catalysed reaction is uridine(2552) in 23S rRNA + S-adenosyl-L-methionine = 2'-O-methyluridine(2552) in 23S rRNA + S-adenosyl-L-homocysteine + H(+). In terms of biological role, specifically methylates the uridine in position 2552 of 23S rRNA at the 2'-O position of the ribose in the fully assembled 50S ribosomal subunit. The polypeptide is Ribosomal RNA large subunit methyltransferase E (Alkalilimnicola ehrlichii (strain ATCC BAA-1101 / DSM 17681 / MLHE-1)).